Consider the following 557-residue polypeptide: Potassium-transporting ATPase potassium-binding subunit (557 aa).

12 consecutive transmembrane segments (helical) span residues 5 to 25 (GFLLIATFLLVLMVLARPLGS), 63 to 83 (LCAILGLNMLGLAVLFFMLLG), 132 to 152 (GLTVQNFLSAASGIAVIFAFI), 170 to 190 (LLRITLWVLVPVALLIALFFI), 253 to 273 (FVQMLAIFLIPTALCFAFGEV), 283 to 303 (LLWAMSVIFVICVGVVMWAEV), 329 to 349 (VLVSSLFAVVTTAASCGAVIA), 356 to 376 (ALGGMVPMWLMQIGEVVFGGV), 379 to 399 (GLYGMMLFVLLAVFIAGLMIG), 416 to 436 (LTALAILVTPTLVLMGAALAM), 484 to 504 (LLAFCMFVGRFGVIIPVMAIA), and 526 to 546 (LFVGLLIGTVLLVGALTFIPA).

The protein belongs to the KdpA family. In terms of assembly, the system is composed of three essential subunits: KdpA, KdpB and KdpC.

The protein resides in the cell inner membrane. Part of the high-affinity ATP-driven potassium transport (or Kdp) system, which catalyzes the hydrolysis of ATP coupled with the electrogenic transport of potassium into the cytoplasm. This subunit binds the periplasmic potassium ions and delivers the ions to the membrane domain of KdpB through an intramembrane tunnel. In Shigella boydii serotype 4 (strain Sb227), this protein is Potassium-transporting ATPase potassium-binding subunit.